Reading from the N-terminus, the 240-residue chain is Flagellar L-ring protein (240 aa).

An N-terminal signal peptide occupies residues 1 to 20 (MIRNFLLFFMPIYAILFLSG). C21 carries the N-palmitoyl cysteine lipid modification. The S-diacylglycerol cysteine moiety is linked to residue C21.

It belongs to the FlgH family. The basal body constitutes a major portion of the flagellar organelle and consists of four rings (L,P,S, and M) mounted on a central rod.

Its subcellular location is the cell outer membrane. It is found in the bacterial flagellum basal body. Its function is as follows. Assembles around the rod to form the L-ring and probably protects the motor/basal body from shearing forces during rotation. This chain is Flagellar L-ring protein, found in Sulfurimonas denitrificans (strain ATCC 33889 / DSM 1251) (Thiomicrospira denitrificans (strain ATCC 33889 / DSM 1251)).